The primary structure comprises 741 residues: Pentatricopeptide repeat-containing protein At1g05670, mitochondrial (741 aa).

Residues 1–21 (MKKPFTGLLMKRGTLSSFRNF) constitute a mitochondrion transit peptide. PPR repeat units follow at residues 174-208 (DPRV…GLVL), 209-244 (SVDS…GVCW), 245-279 (NVAS…GYTP), 280-314 (DVIS…GLKP), 315-349 (NSYI…GILP), 350-384 (DTVV…DITP), 385-419 (DVLT…GLEP), 420-454 (DSVT…GCSP), 455-489 (NVVT…GLQP), 490-524 (NIFT…GLNA), 525-559 (DTVT…GLQP), 560-594 (TIVT…GIAP), 595-629 (NATT…GVGP), 630-664 (DGKT…GFSV), and 665-699 (SVST…GLAA).

It belongs to the PPR family. P subfamily.

It localises to the mitochondrion. This is Pentatricopeptide repeat-containing protein At1g05670, mitochondrial from Arabidopsis thaliana (Mouse-ear cress).